A 1066-amino-acid chain; its full sequence is Thyrotropin-releasing hormone-degrading ectoenzyme (1066 aa).

Residues 1 to 14 (MALDGERGEQEEEK) show a composition bias toward basic and acidic residues. The interval 1–43 (MALDGERGEQEEEKKKKKKKKKRKKKEEEGAEKSSSPFAATMG) is disordered. The Cytoplasmic segment spans residues 1-81 (MALDGERGEQ…ERHIAVHKRL (81 aa)). Residues 15-25 (KKKKKKKKRKK) are compositionally biased toward basic residues. Phosphothreonine; by PKC is present on threonine 71. Residues 82–102 (VLAFAVSIVALLAVTMLAVLL) traverse the membrane as a helical; Signal-anchor for type II membrane protein segment. The Extracellular segment spans residues 103-1066 (SLRFDECGAS…FQWLGKAMRH (964 aa)). The disordered stretch occupies residues 118-176 (TDGGLGGFPERDSNSSFPGSARRNHHAGGESSQRESGEVGTPGTPSAQPPSEEEREQWQ). Residues asparagine 131, asparagine 202, asparagine 217, asparagine 264, and asparagine 380 are each glycosylated (N-linked (GlcNAc...) asparagine). 446-450 (AAMEN) is a binding site for substrate. Histidine 482 is a binding site for Zn(2+). Glutamate 483 acts as the Proton acceptor in catalysis. Zn(2+)-binding residues include histidine 486 and glutamate 505. N-linked (GlcNAc...) asparagine glycans are attached at residues asparagine 647, asparagine 676, asparagine 691, asparagine 705, asparagine 726, asparagine 842, and asparagine 948.

Belongs to the peptidase M1 family. In terms of assembly, homodimer; disulfide-linked. Zn(2+) serves as cofactor.

It localises to the membrane. The enzyme catalyses Release of the N-terminal pyroglutamyl group from pGlu-|-His-Xaa tripeptides and pGlu-|-His-Xaa-Gly tetrapeptides.. Its function is as follows. Specific inactivation of TRH after its release. The polypeptide is Thyrotropin-releasing hormone-degrading ectoenzyme (Trhde) (Mus musculus (Mouse)).